Here is a 408-residue protein sequence, read N- to C-terminus: LL-diaminopimelate aminotransferase (408 aa).

Positions 15 and 42 each coordinate substrate. Pyridoxal 5'-phosphate is bound by residues Y72, 108–109 (SK), Y132, N187, Y218, and 246–248 (SFS). Substrate is bound by residues K109, Y132, and N187. Position 249 is an N6-(pyridoxal phosphate)lysine (K249). The pyridoxal 5'-phosphate site is built by R257 and N291. Residues N291 and R387 each coordinate substrate.

Belongs to the class-I pyridoxal-phosphate-dependent aminotransferase family. LL-diaminopimelate aminotransferase subfamily. In terms of assembly, homodimer. Pyridoxal 5'-phosphate serves as cofactor.

It catalyses the reaction (2S,6S)-2,6-diaminopimelate + 2-oxoglutarate = (S)-2,3,4,5-tetrahydrodipicolinate + L-glutamate + H2O + H(+). It participates in amino-acid biosynthesis; L-lysine biosynthesis via DAP pathway; LL-2,6-diaminopimelate from (S)-tetrahydrodipicolinate (aminotransferase route): step 1/1. Its function is as follows. Involved in the synthesis of meso-diaminopimelate (m-DAP or DL-DAP), required for both lysine and peptidoglycan biosynthesis. Catalyzes the direct conversion of tetrahydrodipicolinate to LL-diaminopimelate. The protein is LL-diaminopimelate aminotransferase of Prochlorococcus marinus (strain NATL1A).